Here is a 593-residue protein sequence, read N- to C-terminus: MENITDGKWGSLPVKLHDNILQTLKELGFTYMTPVQSACIPLFMSNKDVAAEAVTGSGKTLAFVIPALEILLKREEKLKKMQVGALIITPTRELAMQISEVMGRFLQGFPQFTQILLIGGSNPIEDVEKLKTQGANIIIATPGRLEDMFRRKADGLDLATAVKSLDVLVLDEADRLLDMGFEASLNTILGYLPKQRRTGLFSATQTQELEKLVRAGLRNPVRITVKEKGVAASSVQKTPAKLSNYYTMCRAEEKFNTLVAFLRQHKHEKQLVFFSTCACVEYFGKALEVLVKNVSIHCIHGKMKHKRNKIFADFRALKSGILVCTDVMARGIDIPEVNWVLQYDPPSSASSFVHRCGRTARIGNQGNALVFLLPMEESYVNFLSINQKCPLQSFSSVKDVVDVLPKLKAMALGDRAMFEKGMRAFVSYVQAYAKHECSLIFRIKDLDFAALARGFALLRLPKMPELRGKTFPDFKAEAIDTDTIRFKDKNREKQRQKWLAEQKEKEVPLRKNFIKNKAWSKQKIKKDRKKKRLPKAKLDQDSDAAEEDLNELMNDTRLLKKLKKGKITEEDFDKQMSSTDKHKPAGIDSSDGD.

The Q motif signature appears at 9-37 (WGSLPVKLHDNILQTLKELGFTYMTPVQS). In terms of domain architecture, Helicase ATP-binding spans 40–223 (IPLFMSNKDV…RAGLRNPVRI (184 aa)). 53 to 60 (AVTGSGKT) serves as a coordination point for ATP. Positions 171–174 (DEAD) match the DEAD box motif. The Helicase C-terminal domain occupies 241–405 (KLSNYYTMCR…SVKDVVDVLP (165 aa)). A compositionally biased stretch (basic residues) spans 524-535 (IKKDRKKKRLPK). Disordered stretches follow at residues 524–545 (IKKD…SDAA) and 569–593 (EEDF…SDGD). The important for nuclear localization stretch occupies residues 531-560 (KRLPKAKLDQDSDAAEEDLNELMNDTRLLK). Residues 535 to 565 (KAKLDQDSDAAEEDLNELMNDTRLLKKLKKG) adopt a coiled-coil conformation.

It belongs to the DEAD box helicase family. DDX55/SPB4 subfamily. Interacts with 28S rRNA. Interacts with double-stranded RNA substrates in vitro; the interaction stimulates ATPase activity.

The protein resides in the nucleus. The protein localises to the nucleoplasm. It catalyses the reaction ATP + H2O = ADP + phosphate + H(+). Probable ATP-binding RNA helicase. Plays an essential role in early embryonic development. Has ATPase activity and is involved in the maturation of precursor large subunit rRNAs. The protein is ATP-dependent RNA helicase DDX55 (ddx55) of Danio rerio (Zebrafish).